The chain runs to 152 residues: Large ribosomal subunit protein uL11 (152 aa).

The protein belongs to the universal ribosomal protein uL11 family. As to quaternary structure, part of the ribosomal stalk of the 50S ribosomal subunit. Interacts with L10 and the large rRNA to form the base of the stalk. L10 forms an elongated spine to which L12 dimers bind in a sequential fashion forming a multimeric L10(L12)X complex. One or more lysine residues are methylated.

Functionally, forms part of the ribosomal stalk which helps the ribosome interact with GTP-bound translation factors. In Mycoplasmoides gallisepticum (strain R(low / passage 15 / clone 2)) (Mycoplasma gallisepticum), this protein is Large ribosomal subunit protein uL11.